Reading from the N-terminus, the 334-residue chain is D-fructose 1,6-bisphosphatase class 2/sedoheptulose 1,7-bisphosphatase (334 aa).

Positions 33, 57, 85, and 88 each coordinate Mn(2+). Residues Glu88–Thr90, Tyr119, Arg164–Arg166, and Asp186–Asp188 each bind substrate. Glu213 is a Mn(2+) binding site.

It belongs to the FBPase class 2 family. As to quaternary structure, homotetramer. It depends on Mn(2+) as a cofactor.

It catalyses the reaction beta-D-fructose 1,6-bisphosphate + H2O = beta-D-fructose 6-phosphate + phosphate. It carries out the reaction D-sedoheptulose 1,7-bisphosphate + H2O = D-sedoheptulose 7-phosphate + phosphate. It participates in carbohydrate biosynthesis; Calvin cycle. Functionally, catalyzes the hydrolysis of fructose 1,6-bisphosphate (Fru 1,6-P2) and sedoheptulose 1,7-bisphosphate (Sed 1,7-P2) to fructose 6-phosphate and sedoheptulose 7-phosphate, respectively. The protein is D-fructose 1,6-bisphosphatase class 2/sedoheptulose 1,7-bisphosphatase of Synechococcus sp. (strain CC9311).